The primary structure comprises 448 residues: Phosphoglucosamine mutase (448 aa).

Catalysis depends on Ser-104, which acts as the Phosphoserine intermediate. The Mg(2+) site is built by Ser-104, Asp-241, Asp-243, and Asp-245. Residue Ser-104 is modified to Phosphoserine.

Belongs to the phosphohexose mutase family. It depends on Mg(2+) as a cofactor. Activated by phosphorylation.

The enzyme catalyses alpha-D-glucosamine 1-phosphate = D-glucosamine 6-phosphate. Functionally, catalyzes the conversion of glucosamine-6-phosphate to glucosamine-1-phosphate. The protein is Phosphoglucosamine mutase of Nocardioides sp. (strain ATCC BAA-499 / JS614).